We begin with the raw amino-acid sequence, 786 residues long: DNA ligase (786 aa).

Residues 32 to 36 (DAEYD), 81 to 82 (SL), and E121 contribute to the NAD(+) site. The active-site N6-AMP-lysine intermediate is the K123. 4 residues coordinate NAD(+): R144, E181, K297, and K321. Positions 415, 418, 445, and 451 each coordinate Zn(2+). The 84-residue stretch at 703–786 (AEGLPLAGQT…EQLKSYGIEA (84 aa)) folds into the BRCT domain.

Belongs to the NAD-dependent DNA ligase family. LigA subfamily. Requires Mg(2+) as cofactor. Mn(2+) serves as cofactor.

It carries out the reaction NAD(+) + (deoxyribonucleotide)n-3'-hydroxyl + 5'-phospho-(deoxyribonucleotide)m = (deoxyribonucleotide)n+m + AMP + beta-nicotinamide D-nucleotide.. In terms of biological role, DNA ligase that catalyzes the formation of phosphodiester linkages between 5'-phosphoryl and 3'-hydroxyl groups in double-stranded DNA using NAD as a coenzyme and as the energy source for the reaction. It is essential for DNA replication and repair of damaged DNA. The chain is DNA ligase from Ectopseudomonas mendocina (strain ymp) (Pseudomonas mendocina).